The chain runs to 221 residues: Interleukin-12 subunit alpha (221 aa).

The N-terminal stretch at 1–25 (MCPLRSLLLLSTLVLLHHLPHLSLG) is a signal peptide. Intrachain disulfides connect cysteine 39–cysteine 112, cysteine 66–cysteine 198, and cysteine 87–cysteine 125. N-linked (GlcNAc...) asparagine glycosylation is found at asparagine 41 and asparagine 95.

This sequence belongs to the IL-6 superfamily. As to quaternary structure, heterodimer with IL12B; disulfide-linked. This heterodimer is known as interleukin IL-12. Heterodimer with EBI3/IL27B; not disulfide-linked. This heterodimer is known as interleukin IL-35. Interacts with NBR1; this interaction promotes IL-12 secretion.

Its subcellular location is the secreted. In terms of biological role, heterodimerizes with IL12B to form the IL-12 cytokine or with EBI3/IL27B to form the IL-35 cytokine. IL-12 is primarily produced by professional antigen-presenting cells (APCs) such as B-cells and dendritic cells (DCs) as well as macrophages and granulocytes and regulates T-cell and natural killer-cell responses, induces the production of interferon-gamma (IFN-gamma), favors the differentiation of T-helper 1 (Th1) cells and is an important link between innate resistance and adaptive immunity. Mechanistically, exerts its biological effects through a receptor composed of IL12R1 and IL12R2 subunits. Binding to the receptor results in the rapid tyrosine phosphorylation of a number of cellular substrates including the JAK family kinases TYK2 and JAK2. In turn, recruited STAT4 gets phosphorylated and translocates to the nucleus where it regulates cytokine/growth factor responsive genes. As part of IL-35, plays essential roles in maintaining the immune homeostasis of the liver microenvironment and also functions as an immune-suppressive cytokine. Mediates biological events through unconventional receptors composed of IL12RB2 and gp130/IL6ST heterodimers or homodimers. Signaling requires the transcription factors STAT1 and STAT4, which form a unique heterodimer that binds to distinct DNA sites. This is Interleukin-12 subunit alpha (IL12A) from Cervus elaphus (Red deer).